The primary structure comprises 427 residues: Glutamate-1-semialdehyde 2,1-aminomutase (427 aa).

Lys265 is subject to N6-(pyridoxal phosphate)lysine.

Belongs to the class-III pyridoxal-phosphate-dependent aminotransferase family. HemL subfamily. In terms of assembly, homodimer. The cofactor is pyridoxal 5'-phosphate.

The protein resides in the cytoplasm. The catalysed reaction is (S)-4-amino-5-oxopentanoate = 5-aminolevulinate. It functions in the pathway porphyrin-containing compound metabolism; protoporphyrin-IX biosynthesis; 5-aminolevulinate from L-glutamyl-tRNA(Glu): step 2/2. The sequence is that of Glutamate-1-semialdehyde 2,1-aminomutase from Shewanella amazonensis (strain ATCC BAA-1098 / SB2B).